Consider the following 606-residue polypeptide: Serine/threonine-protein kinase A-Raf (606 aa).

One can recognise an RBD domain in the interval 19–91; that stretch reads GTVKVYLPNK…DGEELIVEVL (73 aa). Residues 98-144 form a Phorbol-ester/DAG-type zinc finger; that stretch reads MHNFVRKTFFSLAFCDFCLKFLFHGFRCQTCGYKFHQHCSSKVPTVC. Zn(2+)-binding residues include histidine 99, cysteine 112, cysteine 115, cysteine 125, cysteine 128, histidine 133, cysteine 136, and cysteine 144. A phosphoserine mark is found at serine 157 and serine 162. The interval 160–207 is disordered; the sequence is DLSGGSRQHEAPSNRPLNELLTPQGPSPRTQHCDPEHFPFPAPANAPL. Threonine 181 bears the Phosphothreonine mark. 2 positions are modified to phosphoserine: serine 186 and serine 214. The tract at residues 240 to 290 is disordered; it reads STDAAGSRGGSDGTPRGSPSPASVSSGRKSPHSKSPAEQRERKSLADDKKK. The residue at position 253 (threonine 253) is a Phosphothreonine. Phosphoserine is present on residues serine 257 and serine 269. The span at 274-289 shows a compositional bias: basic and acidic residues; it reads SPAEQRERKSLADDKK. A Protein kinase domain is found at 310–570; the sequence is VQLLKRIGTG…PQILATIELL (261 aa). ATP is bound by residues 316–324 and lysine 336; that span reads IGTGSFGTV. Threonine 318 bears the Phosphothreonine mark. Aspartate 429 acts as the Proton acceptor in catalysis.

The protein belongs to the protein kinase superfamily. TKL Ser/Thr protein kinase family. RAF subfamily. Interacts with TH1L/NELFD. It depends on Zn(2+) as a cofactor. In terms of processing, dephosphorylation of Ser-214 by the SHOC2-MRAS-PP1c (SMP) complex consisting of SHOC2, GTP-bound M-Ras/MRAS and the catalytic subunit of protein phosphatase 1 (PPP1CA, PPP1CB or PPP1CC); this relieves inactivation and stimulates kinase activity. Predominantly in urogenital tissues.

The catalysed reaction is L-seryl-[protein] + ATP = O-phospho-L-seryl-[protein] + ADP + H(+). It catalyses the reaction L-threonyl-[protein] + ATP = O-phospho-L-threonyl-[protein] + ADP + H(+). Involved in the transduction of mitogenic signals from the cell membrane to the nucleus. May also regulate the TOR signaling cascade. Phosphorylates PFKFB2. Its function is as follows. Serves as a positive regulator of myogenic differentiation by inducing cell cycle arrest, the expression of myogenin and other muscle-specific proteins, and myotube formation. This chain is Serine/threonine-protein kinase A-Raf (ARAF), found in Homo sapiens (Human).